We begin with the raw amino-acid sequence, 1486 residues long: Chromosome partition protein MukB (1486 aa).

34–41 contributes to the ATP binding site; that stretch reads GGNGAGKS. Coiled coils occupy residues 326–418, 444–480, and 509–603; these read LEAD…QYNQ, LETF…QAYQ, and RHLA…RAPV. The interval 666–783 is flexible hinge; it reads PGGSEDQRLN…EVPLFGRAAR (118 aa). Coiled coils occupy residues 835–923, 977–1115, and 1209–1266; these read EAEI…AKLE, EMLS…TAKA, and VEAI…QNVS.

Belongs to the SMC family. MukB subfamily. Homodimerization via its hinge domain. Binds to DNA via its C-terminal region. Interacts, and probably forms a ternary complex, with MukE and MukF via its C-terminal region. The complex formation is stimulated by calcium or magnesium. Interacts with tubulin-related protein FtsZ.

The protein localises to the cytoplasm. It is found in the nucleoid. Its function is as follows. Plays a central role in chromosome condensation, segregation and cell cycle progression. Functions as a homodimer, which is essential for chromosome partition. Involved in negative DNA supercoiling in vivo, and by this means organize and compact chromosomes. May achieve or facilitate chromosome segregation by condensation DNA from both sides of a centrally located replisome during cell division. The chain is Chromosome partition protein MukB from Escherichia coli (strain 55989 / EAEC).